Here is a 505-residue protein sequence, read N- to C-terminus: 2,3-bisphosphoglycerate-independent phosphoglycerate mutase (505 aa).

2 residues coordinate Mn(2+): D13 and S63. S63 (phosphoserine intermediate) is an active-site residue. Substrate contacts are provided by residues H124, 153-154, R183, R189, 254-257, and K329; these read RD and RADR. Mn(2+) contacts are provided by D395, H399, D436, H437, and H455.

Belongs to the BPG-independent phosphoglycerate mutase family. In terms of assembly, monomer. Requires Mn(2+) as cofactor.

It carries out the reaction (2R)-2-phosphoglycerate = (2R)-3-phosphoglycerate. Its pathway is carbohydrate degradation; glycolysis; pyruvate from D-glyceraldehyde 3-phosphate: step 3/5. Its function is as follows. Catalyzes the interconversion of 2-phosphoglycerate and 3-phosphoglycerate. The protein is 2,3-bisphosphoglycerate-independent phosphoglycerate mutase of Agrobacterium fabrum (strain C58 / ATCC 33970) (Agrobacterium tumefaciens (strain C58)).